Here is a 252-residue protein sequence, read N- to C-terminus: Ubiquitin carboxyl-terminal hydrolase isozyme L1 (252 aa).

Methionine 1 is modified (N-acetylmethionine). Positions 2–250 constitute a UCH catalytic domain; that stretch reads QLKPMEINPE…VRFSAVALCK (249 aa). Positions 5-10 are interaction with ubiquitin; it reads PMEINP. Residue cysteine 119 is the Nucleophile of the active site. Serine 154 carries the phosphoserine modification. The active-site Proton donor is histidine 190. The interval 240-245 is interaction with ubiquitin; the sequence is EVRFSA. Cysteine 249 carries the S-farnesyl cysteine lipid modification. Positions 250–252 are cleaved as a propeptide — removed in mature form; sequence KAA.

Belongs to the peptidase C12 family. In terms of assembly, monomer. Homodimer. Interacts with COPS5 and SNCA. Post-translationally, O-glycosylated. In terms of tissue distribution, neurons and cells of the diffuse neuroendocrine system and their tumors.

Its subcellular location is the cytoplasm. The protein resides in the endoplasmic reticulum membrane. The enzyme catalyses Thiol-dependent hydrolysis of ester, thioester, amide, peptide and isopeptide bonds formed by the C-terminal Gly of ubiquitin (a 76-residue protein attached to proteins as an intracellular targeting signal).. In terms of biological role, ubiquitin-protein hydrolase involved both in the processing of ubiquitin precursors and of ubiquitinated proteins. This enzyme is a thiol protease that recognizes and hydrolyzes a peptide bond at the C-terminal glycine of ubiquitin. Also binds to free monoubiquitin and may prevent its degradation in lysosomes. The homodimer may have ATP-independent ubiquitin ligase activity. The sequence is that of Ubiquitin carboxyl-terminal hydrolase isozyme L1 (UCHL1) from Bos taurus (Bovine).